We begin with the raw amino-acid sequence, 283 residues long: Polyamine aminopropyltransferase (283 aa).

One can recognise a PABS domain in the interval 5 to 238 (PTWIDEYHKG…GIWSWTFASD (234 aa)). Gln-32 is an S-methyl-5'-thioadenosine binding site. Spermidine is bound by residues His-63 and Asp-87. S-methyl-5'-thioadenosine is bound by residues Glu-107 and 139-140 (DG). Residue Asp-158 is the Proton acceptor of the active site. 158-161 (DCSD) contacts spermidine.

This sequence belongs to the spermidine/spermine synthase family. As to quaternary structure, homodimer or homotetramer.

It is found in the cytoplasm. The enzyme catalyses S-adenosyl 3-(methylsulfanyl)propylamine + putrescine = S-methyl-5'-thioadenosine + spermidine + H(+). Its pathway is amine and polyamine biosynthesis; spermidine biosynthesis; spermidine from putrescine: step 1/1. Functionally, catalyzes the irreversible transfer of a propylamine group from the amino donor S-adenosylmethioninamine (decarboxy-AdoMet) to putrescine (1,4-diaminobutane) to yield spermidine. The chain is Polyamine aminopropyltransferase from Prochlorococcus marinus subsp. pastoris (strain CCMP1986 / NIES-2087 / MED4).